The primary structure comprises 182 residues: MDAKKYLEEGARARLNLNIEKIIGIADKISSAISSGNKLIVFGNGGSAADAQHFVAELTGHFMKERKPLAAIALTTNTSSITAIANDYSYDVVFSRQVEALAKPGDVVVGISTSGNSKNVIEGIKSAKRIGCHTIAFTGRSGGQLKGVADETLNVDSDLTSIIQEMHITVIHMICAMIDEKF.

The SIS domain maps to 29 to 182; the sequence is ISSAISSGNK…MICAMIDEKF (154 aa). Substrate is bound at residue 44-46; sequence NGG. 2 residues coordinate Zn(2+): histidine 53 and glutamate 57. Residues glutamate 57, 86 to 87, 112 to 114, serine 117, and glutamine 164 each bind substrate; these read ND and STS. 2 residues coordinate Zn(2+): glutamine 164 and histidine 172.

This sequence belongs to the SIS family. GmhA subfamily. Requires Zn(2+) as cofactor.

The protein resides in the cytoplasm. It carries out the reaction 2 D-sedoheptulose 7-phosphate = D-glycero-alpha-D-manno-heptose 7-phosphate + D-glycero-beta-D-manno-heptose 7-phosphate. It functions in the pathway carbohydrate biosynthesis; D-glycero-D-manno-heptose 7-phosphate biosynthesis; D-glycero-alpha-D-manno-heptose 7-phosphate and D-glycero-beta-D-manno-heptose 7-phosphate from sedoheptulose 7-phosphate: step 1/1. Its function is as follows. Catalyzes the isomerization of sedoheptulose 7-phosphate in D-glycero-D-manno-heptose 7-phosphate. This Thermoplasma acidophilum (strain ATCC 25905 / DSM 1728 / JCM 9062 / NBRC 15155 / AMRC-C165) protein is Probable phosphoheptose isomerase.